The sequence spans 89 residues: Sec-independent protein translocase protein TatA (89 aa).

A helical membrane pass occupies residues 1–21 (MGGISIWQLLIIAVIVVLLFG). A disordered region spans residues 65–89 (ADKQADTNQEQAKTEDAKRHDKEQV). The span at 76–89 (AKTEDAKRHDKEQV) shows a compositional bias: basic and acidic residues.

It belongs to the TatA/E family. As to quaternary structure, the Tat system comprises two distinct complexes: a TatABC complex, containing multiple copies of TatA, TatB and TatC subunits, and a separate TatA complex, containing only TatA subunits. Substrates initially bind to the TatABC complex, which probably triggers association of the separate TatA complex to form the active translocon.

The protein resides in the cell inner membrane. Functionally, part of the twin-arginine translocation (Tat) system that transports large folded proteins containing a characteristic twin-arginine motif in their signal peptide across membranes. TatA could form the protein-conducting channel of the Tat system. The chain is Sec-independent protein translocase protein TatA from Shigella flexneri.